The sequence spans 343 residues: Peptide methionine sulfoxide reductase msrA/msrB (343 aa).

The tract at residues 21–174 (KVIYLAGGCF…PNGYCHIDLK (154 aa)) is peptide methionine sulfoxide reductase A. The active-site Cysteine sulfenic acid (-SOH) intermediate is the Cys29. Residues 191 to 314 (DEVLKKKLTQ…NSASLRFIPL (124 aa)) form the MsrB domain. Catalysis depends on Cys303, which acts as the Nucleophile.

It in the N-terminal section; belongs to the MsrA Met sulfoxide reductase family. In the C-terminal section; belongs to the MsrB Met sulfoxide reductase family.

It catalyses the reaction L-methionyl-[protein] + [thioredoxin]-disulfide + H2O = L-methionyl-(S)-S-oxide-[protein] + [thioredoxin]-dithiol. The catalysed reaction is [thioredoxin]-disulfide + L-methionine + H2O = L-methionine (S)-S-oxide + [thioredoxin]-dithiol. The enzyme catalyses L-methionyl-[protein] + [thioredoxin]-disulfide + H2O = L-methionyl-(R)-S-oxide-[protein] + [thioredoxin]-dithiol. Its function is as follows. Has an important function as a repair enzyme for proteins that have been inactivated by oxidation. Catalyzes the reversible oxidation-reduction of methionine sulfoxide in proteins to methionine. The chain is Peptide methionine sulfoxide reductase msrA/msrB from Enterococcus faecalis (Streptococcus faecalis).